Here is a 163-residue protein sequence, read N- to C-terminus: NADH-quinone oxidoreductase subunit I (163 aa).

4Fe-4S ferredoxin-type domains are found at residues 54–84 (LRRY…IESE) and 94–123 (TRYD…ETRI). Residues cysteine 64, cysteine 67, cysteine 70, cysteine 74, cysteine 103, cysteine 106, cysteine 109, and cysteine 113 each coordinate [4Fe-4S] cluster.

The protein belongs to the complex I 23 kDa subunit family. As to quaternary structure, NDH-1 is composed of 14 different subunits. Subunits NuoA, H, J, K, L, M, N constitute the membrane sector of the complex. It depends on [4Fe-4S] cluster as a cofactor.

It is found in the cell inner membrane. The enzyme catalyses a quinone + NADH + 5 H(+)(in) = a quinol + NAD(+) + 4 H(+)(out). Its function is as follows. NDH-1 shuttles electrons from NADH, via FMN and iron-sulfur (Fe-S) centers, to quinones in the respiratory chain. The immediate electron acceptor for the enzyme in this species is believed to be ubiquinone. Couples the redox reaction to proton translocation (for every two electrons transferred, four hydrogen ions are translocated across the cytoplasmic membrane), and thus conserves the redox energy in a proton gradient. The polypeptide is NADH-quinone oxidoreductase subunit I (Methylobacillus flagellatus (strain ATCC 51484 / DSM 6875 / VKM B-1610 / KT)).